A 357-amino-acid chain; its full sequence is NAD-dependent protein deacetylase HST2 (357 aa).

Residue serine 2 is modified to N-acetylserine. The Deacetylase sirtuin-type domain maps to 5–284; sequence TASTEMSVRK…EQLVEELGWQ (280 aa). Residues 32 to 52 and 115 to 118 each bind NAD(+); these read GAGISTSCGIPDFRSPGTGLY and QNID. Histidine 135 acts as the Proton acceptor in catalysis. Zn(2+) is bound by residues cysteine 143, cysteine 146, cysteine 170, and cysteine 173. Residues 223 to 225, 248 to 250, and serine 270 each bind NAD(+); these read GTS and NLE. Basic and acidic residues predominate over residues 317–329; it reads LDQSEHESADKKD. Positions 317–357 are disordered; that stretch reads LDQSEHESADKKDKKLQRLNGHDSDEDGASNSSSSQKAAKE. Serine 340 carries the phosphoserine modification.

This sequence belongs to the sirtuin family. Class I subfamily. In terms of assembly, homotrimer. Monomer. Homotrimeric in its unliganded state. Undergoes a trimer-monomer transition upon acetyl-lysine substrate binding. Zn(2+) is required as a cofactor.

It localises to the cytoplasm. The protein resides in the nucleus. The catalysed reaction is N(6)-acetyl-L-lysyl-[protein] + NAD(+) + H2O = 2''-O-acetyl-ADP-D-ribose + nicotinamide + L-lysyl-[protein]. Inhibited by ADP-ribose and nicotinamide. Its function is as follows. NAD-dependent histone deacetylase that is involved in nuclear silencing events. Derepresses subtelomeric silencing and increases repression in nucleolar (rDNA) silencing. Its function is negatively regulated by active nuclear export. The protein is NAD-dependent protein deacetylase HST2 (HST2) of Saccharomyces cerevisiae (strain ATCC 204508 / S288c) (Baker's yeast).